Consider the following 374-residue polypeptide: Chaperone protein DnaJ (374 aa).

In terms of domain architecture, J spans Asp-4 to Gly-68. The segment at Gly-133–Ser-215 adopts a CR-type zinc-finger fold. Residues Cys-146, Cys-149, Cys-163, Cys-166, Cys-189, Cys-192, Cys-203, and Cys-206 each coordinate Zn(2+). 4 CXXCXGXG motif repeats span residues Cys-146–Gly-153, Cys-163–Gly-170, Cys-189–Gly-196, and Cys-203–Gly-210.

This sequence belongs to the DnaJ family. As to quaternary structure, homodimer. The cofactor is Zn(2+).

The protein localises to the cytoplasm. In terms of biological role, participates actively in the response to hyperosmotic and heat shock by preventing the aggregation of stress-denatured proteins and by disaggregating proteins, also in an autonomous, DnaK-independent fashion. Unfolded proteins bind initially to DnaJ; upon interaction with the DnaJ-bound protein, DnaK hydrolyzes its bound ATP, resulting in the formation of a stable complex. GrpE releases ADP from DnaK; ATP binding to DnaK triggers the release of the substrate protein, thus completing the reaction cycle. Several rounds of ATP-dependent interactions between DnaJ, DnaK and GrpE are required for fully efficient folding. Also involved, together with DnaK and GrpE, in the DNA replication of plasmids through activation of initiation proteins. In Acaryochloris marina (strain MBIC 11017), this protein is Chaperone protein DnaJ.